A 1400-amino-acid polypeptide reads, in one-letter code: ABC transporter G family member 30 (1400 aa).

Residue asparagine 116 is glycosylated (N-linked (GlcNAc...) asparagine). The ABC transporter 1 domain occupies 141–414; that stretch reads LLSEFICSKK…FEEFGFKCPE (274 aa). 174 to 181 contacts ATP; it reads GPPGCGKT. An N-linked (GlcNAc...) asparagine glycan is attached at asparagine 472. Positions 492–704 constitute an ABC transmembrane type-2 1 domain; the sequence is EMLKACSRRE…AEIGLTANEF (213 aa). The next 7 helical transmembrane spans lie at 510–530, 553–573, 582–602, 628–648, 652–672, 679–699, and 738–758; these read FIYLFKSALLVFNALVTMTVF, LFRLLADGLPELTLTISRLGV, FYPAWAYAIPSIILKIPLSVL, FLILSTFNLSCVSMFRAIAAI, IIASTITGAISILVLSLFGGF, MPAWLGWGFWLSPLSYAEIGL, and TAFGALVGFVLFFNALYVLAL. One can recognise an ABC transporter 2 domain in the interval 808-1053; sequence VTFQNVQYYI…VIEYFESFSG (246 aa). 845-852 contacts ATP; it reads GVSGAGKT. Asparagine 899 and asparagine 1040 each carry an N-linked (GlcNAc...) asparagine glycan. Positions 1125–1339 constitute an ABC transmembrane type-2 2 domain; the sequence is VQLKACLWKQ…VLEGLLSSQY (215 aa). Transmembrane regions (helical) follow at residues 1144–1164, 1179–1199, 1228–1248, 1263–1283, 1289–1309, 1317–1337, and 1372–1392; these read HNITRIVFILLDSTLCGLLFW, IFGSMYTLVVFPGMNNCAAVI, VLIEVPYSLLQSLLCTIIVYP, LYSIFCSLLIFNYSGMLMVAL, MAVTLRSSFFSMLNLFAGFVI, WWIWMYYLSPTSWVLEGLLSS, and VVAFVLIAYPIIVATLFAFFM.

Belongs to the ABC transporter superfamily. ABCG family. PDR (TC 3.A.1.205) subfamily. In terms of tissue distribution, confined to roots. In seeds, mainly expressed in the embryo and, to a lesser extent, in the endosperm.

It localises to the cell membrane. The enzyme catalyses abscisate(out) + ATP + H2O = abscisate(in) + ADP + phosphate + H(+). Functionally, together with ABCG40, import into the embryo the abscisic acid (ABA) delivered from the endosperm via ABCG25 and ABCG31-mediated export to suppress radicle extension and subsequent embryonic growth. Involved in root secretion of phytochemicals (phenolics and sugars) which regulate soil microbiota, influencing both fungal and bacterial communities. May be a general defense protein. The polypeptide is ABC transporter G family member 30 (Arabidopsis thaliana (Mouse-ear cress)).